The sequence spans 398 residues: Thyrotropin-releasing hormone receptor (398 aa).

Residues 1–28 (MENETGSELNQTQLQPRAVVALEYQVVT) lie on the Extracellular side of the membrane. Residues N3 and N10 are each glycosylated (N-linked (GlcNAc...) asparagine). The chain crosses the membrane as a helical span at residues 29 to 51 (ILLVLIICGLGIVGNIMVVLVVM). Residues 52–61 (RTKHMRTPTN) lie on the Cytoplasmic side of the membrane. A helical membrane pass occupies residues 62-83 (CYLVSLAVADLMVLVAAGLPNI). At 84 to 99 (TDSIYGSWVYGYVGCL) the chain is on the extracellular side. A disulfide bond links C98 and C179. Residues 100-121 (CITYLQYLGINASSCSITAFTI) traverse the membrane as a helical segment. At 122-144 (ERYIAICHPIKAQFLCTFSRAKK) the chain is on the cytoplasmic side. Residues 145 to 168 (IIIFVWAFTSIYCMLWFFLLDLNI) traverse the membrane as a helical segment. At 169-193 (STYKDAIVVSCGYKISRNYYSPIYL) the chain is on the extracellular side. A helical transmembrane segment spans residues 194–215 (MDFGVFYVVPMILATVLYGFIA). At 216–266 (RILFLNPIPSDPKENSNMWKNDSTHQNKNLNSKTSNRYFNSTVSSRKQVTK) the chain is on the cytoplasmic side. Residues 267 to 288 (MLAVVVILFALLWMPYRTLVVV) traverse the membrane as a helical segment. The Extracellular segment spans residues 289–296 (NSFLSSPF). Residues 297-319 (QENWFLLFCRICIYLNSAINPVI) form a helical membrane-spanning segment. Residues 320–398 (YNLMSQKFRA…LASEITFNQS (79 aa)) lie on the Cytoplasmic side of the membrane.

Belongs to the G-protein coupled receptor 1 family.

It localises to the cell membrane. Its function is as follows. Receptor for thyrotropin-releasing hormone (TRH). Upon ligand binding, this G-protein-coupled receptor triggers activation of the phosphatidylinositol (IP3)-calcium-protein kinase C (PKC) pathway. The protein is Thyrotropin-releasing hormone receptor (TRHR) of Bos taurus (Bovine).